The following is a 268-amino-acid chain: Phosphatidylglycerol--prolipoprotein diacylglyceryl transferase (268 aa).

Helical transmembrane passes span 21–41, 54–74, 93–113, 122–142, 173–193, 203–223, and 236–256; these read WYGI…GRFA, FAII…VFVL, GLAI…YLPM, ADVV…GNFF, VMHP…GILL, GVVF…IESI, and VAQL…AWFL. Residue arginine 137 participates in a 1,2-diacyl-sn-glycero-3-phospho-(1'-sn-glycerol) binding.

This sequence belongs to the Lgt family.

The protein resides in the cell membrane. It carries out the reaction L-cysteinyl-[prolipoprotein] + a 1,2-diacyl-sn-glycero-3-phospho-(1'-sn-glycerol) = an S-1,2-diacyl-sn-glyceryl-L-cysteinyl-[prolipoprotein] + sn-glycerol 1-phosphate + H(+). Its pathway is protein modification; lipoprotein biosynthesis (diacylglyceryl transfer). Catalyzes the transfer of the diacylglyceryl group from phosphatidylglycerol to the sulfhydryl group of the N-terminal cysteine of a prolipoprotein, the first step in the formation of mature lipoproteins. The chain is Phosphatidylglycerol--prolipoprotein diacylglyceryl transferase from Symbiobacterium thermophilum (strain DSM 24528 / JCM 14929 / IAM 14863 / T).